We begin with the raw amino-acid sequence, 195 residues long: Large ribosomal subunit protein uL11m (195 aa).

It belongs to the universal ribosomal protein uL11 family. Component of the mitochondrial ribosome large subunit (39S) which comprises a 16S rRNA and about 50 distinct proteins.

The protein localises to the mitochondrion. The polypeptide is Large ribosomal subunit protein uL11m (mrpl-11) (Caenorhabditis elegans).